The chain runs to 147 residues: 3-dehydroquinate dehydratase (147 aa).

Tyr23 (proton acceptor) is an active-site residue. 3 residues coordinate substrate: Asn75, His81, and Asp88. The Proton donor role is filled by His101. Residues 102 to 103 (LS) and Arg112 contribute to the substrate site.

Belongs to the type-II 3-dehydroquinase family. In terms of assembly, homododecamer.

The enzyme catalyses 3-dehydroquinate = 3-dehydroshikimate + H2O. It functions in the pathway metabolic intermediate biosynthesis; chorismate biosynthesis; chorismate from D-erythrose 4-phosphate and phosphoenolpyruvate: step 3/7. In terms of biological role, catalyzes a trans-dehydration via an enolate intermediate. The sequence is that of 3-dehydroquinate dehydratase from Nitrosococcus oceani (strain ATCC 19707 / BCRC 17464 / JCM 30415 / NCIMB 11848 / C-107).